The primary structure comprises 57 residues: Large ribosomal subunit protein bL32c (57 aa).

It belongs to the bacterial ribosomal protein bL32 family.

It is found in the plastid. Its subcellular location is the chloroplast. This Liriodendron tulipifera (Tuliptree) protein is Large ribosomal subunit protein bL32c.